A 179-amino-acid chain; its full sequence is ATP synthase subunit delta (179 aa).

Belongs to the ATPase delta chain family. As to quaternary structure, F-type ATPases have 2 components, F(1) - the catalytic core - and F(0) - the membrane proton channel. F(1) has five subunits: alpha(3), beta(3), gamma(1), delta(1), epsilon(1). F(0) has three main subunits: a(1), b(2) and c(10-14). The alpha and beta chains form an alternating ring which encloses part of the gamma chain. F(1) is attached to F(0) by a central stalk formed by the gamma and epsilon chains, while a peripheral stalk is formed by the delta and b chains.

It localises to the cell membrane. F(1)F(0) ATP synthase produces ATP from ADP in the presence of a proton or sodium gradient. F-type ATPases consist of two structural domains, F(1) containing the extramembraneous catalytic core and F(0) containing the membrane proton channel, linked together by a central stalk and a peripheral stalk. During catalysis, ATP synthesis in the catalytic domain of F(1) is coupled via a rotary mechanism of the central stalk subunits to proton translocation. In terms of biological role, this protein is part of the stalk that links CF(0) to CF(1). It either transmits conformational changes from CF(0) to CF(1) or is implicated in proton conduction. The polypeptide is ATP synthase subunit delta (Clostridium acetobutylicum (strain ATCC 824 / DSM 792 / JCM 1419 / IAM 19013 / LMG 5710 / NBRC 13948 / NRRL B-527 / VKM B-1787 / 2291 / W)).